The chain runs to 435 residues: Zinc finger and BTB domain-containing protein 25 (435 aa).

In terms of domain architecture, BTB spans 1–107; it reads MDTASHSLVL…GIRFLHADYL (107 aa). Glycyl lysine isopeptide (Lys-Gly) (interchain with G-Cter in SUMO2) cross-links involve residues lysine 142, lysine 148, lysine 198, and lysine 204. A C2H2-type 1 zinc finger spans residues 238-260; sequence HLCHYCGERFDSRSNLRQHLHTH. Residues lysine 303 and lysine 330 each participate in a glycyl lysine isopeptide (Lys-Gly) (interchain with G-Cter in SUMO2) cross-link. The segment at 349–371 adopts a C2H2-type 2 zinc-finger fold; that stretch reads MSCTICGHKFPRKSQLLEHMYTH. Lysine 405 is covalently cross-linked (Glycyl lysine isopeptide (Lys-Gly) (interchain with G-Cter in SUMO2)).

As to expression, expressed mainly in hematopoietic cells and testis.

The protein resides in the nucleus. In terms of biological role, may be involved in transcriptional regulation. This is Zinc finger and BTB domain-containing protein 25 (ZBTB25) from Homo sapiens (Human).